The chain runs to 160 residues: MNFRVGQGYDVHKLVDGRKLILGGVEIPHPTGLLGHSDADALLHAITDALLGAVALGDIGRHFPDTDPRYKGADSRVLLRAAVALLAERGWRPVNVDATLIAQQPKLAPHAVAMVANVAADLGISPDCVNIKGKTNERLGYLGREEAIEAQAVALVERVG.

Residues Asp-10 and His-12 each contribute to the a divalent metal cation site. 4-CDP-2-C-methyl-D-erythritol 2-phosphate is bound by residues 10 to 12 (DVH) and 36 to 37 (HS). Residue His-44 participates in a divalent metal cation binding. 4-CDP-2-C-methyl-D-erythritol 2-phosphate-binding positions include 58–60 (DIG), 63–67 (FPDTD), and Arg-144.

It belongs to the IspF family. In terms of assembly, homotrimer. Requires a divalent metal cation as cofactor.

It catalyses the reaction 4-CDP-2-C-methyl-D-erythritol 2-phosphate = 2-C-methyl-D-erythritol 2,4-cyclic diphosphate + CMP. It functions in the pathway isoprenoid biosynthesis; isopentenyl diphosphate biosynthesis via DXP pathway; isopentenyl diphosphate from 1-deoxy-D-xylulose 5-phosphate: step 4/6. Functionally, involved in the biosynthesis of isopentenyl diphosphate (IPP) and dimethylallyl diphosphate (DMAPP), two major building blocks of isoprenoid compounds. Catalyzes the conversion of 4-diphosphocytidyl-2-C-methyl-D-erythritol 2-phosphate (CDP-ME2P) to 2-C-methyl-D-erythritol 2,4-cyclodiphosphate (ME-CPP) with a corresponding release of cytidine 5-monophosphate (CMP). This is 2-C-methyl-D-erythritol 2,4-cyclodiphosphate synthase from Dechloromonas aromatica (strain RCB).